Reading from the N-terminus, the 217-residue chain is 3,4-dihydroxy-2-butanone 4-phosphate synthase (217 aa).

D-ribulose 5-phosphate-binding positions include 37-38 (RE), Asp42, 150-154 (RRGHT), and Glu174. Mg(2+) is bound at residue Glu38. His153 contacts Mg(2+).

Belongs to the DHBP synthase family. In terms of assembly, homodimer. The cofactor is Mg(2+). Requires Mn(2+) as cofactor.

It catalyses the reaction D-ribulose 5-phosphate = (2S)-2-hydroxy-3-oxobutyl phosphate + formate + H(+). The protein operates within cofactor biosynthesis; riboflavin biosynthesis; 2-hydroxy-3-oxobutyl phosphate from D-ribulose 5-phosphate: step 1/1. In terms of biological role, catalyzes the conversion of D-ribulose 5-phosphate to formate and 3,4-dihydroxy-2-butanone 4-phosphate. This Serratia proteamaculans (strain 568) protein is 3,4-dihydroxy-2-butanone 4-phosphate synthase.